The chain runs to 279 residues: Large ribosomal subunit protein uL2 (279 aa).

Disordered regions lie at residues 29-53 and 224-279; these read PEKS…TTRH and VAMN…KKRK. Positions 253–268 are enriched in basic and acidic residues; the sequence is KEGRTRHPNKESDKLI. Basic residues predominate over residues 269–279; the sequence is VRRRNAGKKRK.

It belongs to the universal ribosomal protein uL2 family. As to quaternary structure, part of the 50S ribosomal subunit. Forms a bridge to the 30S subunit in the 70S ribosome.

In terms of biological role, one of the primary rRNA binding proteins. Required for association of the 30S and 50S subunits to form the 70S ribosome, for tRNA binding and peptide bond formation. It has been suggested to have peptidyltransferase activity; this is somewhat controversial. Makes several contacts with the 16S rRNA in the 70S ribosome. This chain is Large ribosomal subunit protein uL2, found in Leifsonia xyli subsp. xyli (strain CTCB07).